A 167-amino-acid polypeptide reads, in one-letter code: Small ribosomal subunit protein uS5 (167 aa).

Positions 12–75 constitute an S5 DRBM domain; sequence LQEKLIAVNR…EKARRNMVTV (64 aa).

It belongs to the universal ribosomal protein uS5 family. In terms of assembly, part of the 30S ribosomal subunit. Contacts proteins S4 and S8.

Its function is as follows. With S4 and S12 plays an important role in translational accuracy. Functionally, located at the back of the 30S subunit body where it stabilizes the conformation of the head with respect to the body. The protein is Small ribosomal subunit protein uS5 of Shewanella denitrificans (strain OS217 / ATCC BAA-1090 / DSM 15013).